We begin with the raw amino-acid sequence, 294 residues long: Potassium-transporting ATPase subunit beta (294 aa).

Topologically, residues 1-36 (MAALQEKKSCSQRMAEFRHYCWNPDTGQMLGRTPAR) are cytoplasmic. The chain crosses the membrane as a helical; Signal-anchor for type II membrane protein span at residues 37-57 (WVWISLYYAGFYVVMTGLFAL). Topologically, residues 58–294 (CIYVLMQTID…KVEFKLTIQK (237 aa)) are extracellular. 5 N-linked (GlcNAc...) asparagine glycosylation sites follow: N99, N103, N130, N146, and N161. An intrachain disulfide couples C131 to C152. C162 and C178 are oxidised to a cystine. 2 N-linked (GlcNAc...) asparagine glycosylation sites follow: N193 and N225. Positions 194–294 (NTAPRVDCTF…KVEFKLTIQK (101 aa)) are immunoglobulin-like. A disulfide bridge connects residues C201 and C266.

It belongs to the X(+)/potassium ATPases subunit beta family. As to quaternary structure, the ATPase pump is composed of two subunits: alpha (catalytic) and beta (regulatory). Interacts with alpha subunit ATP12A; this interaction is required for the formation of a functionally active pump and targeting at the plasma membrane. Interacts (via N-terminus) with alpha subunit ATP4A (via the P-domain). In terms of processing, N-glycosylation is necessary for assembly and functional expression of the pump at the plasma membrane. In terms of tissue distribution, expressed in parietal cells (at protein level).

It localises to the apical cell membrane. The protein resides in the cell membrane. The beta subunit of the gastric H(+)/K(+) ATPase pump which transports H(+) ions in exchange for K(+) ions across the apical membrane of parietal cells. Plays a structural and regulatory role in the assembly and membrane targeting of a functionally active pump. Within a transport cycle, the transfer of a H(+) ion across the membrane is coupled to ATP hydrolysis and is associated with a transient phosphorylation of the alpha subunit that shifts the pump conformation from inward-facing (E1) to outward-facing state (E2). Interacts with the phosphorylation domain of the alpha subunit and functions as a ratchet, stabilizing the lumenal-open E2 conformation and preventing the reverse reaction of the transport cycle. This Mus musculus (Mouse) protein is Potassium-transporting ATPase subunit beta (Atp4b).